Reading from the N-terminus, the 163-residue chain is Interleukin-17F (163 aa).

The N-terminal stretch at 1 to 30 is a signal peptide; sequence MTVKSLHVTAMVKYLLLLILGLAFLRETAA. Asn-83 is a glycosylation site (N-linked (GlcNAc...) asparagine). 2 cysteine pairs are disulfide-bonded: Cys-102–Cys-152 and Cys-107–Cys-154.

The protein belongs to the IL-17 family. As to quaternary structure, homodimer; disulfide-linked. Heterodimer with IL17A (IL17A-IL17F). Forms complexes with IL17RA and IL17RC receptors with 2:1 binding stoichiometry: two receptor chains for one interleukin molecule. IL17F homodimer forms predominantly complexes with IL17RC homodimer, whereas IL17A-IL17F favors complexes with IL17RA-IL17RC. IL17RA and IL17RC chains cannot distinguish between IL17A and IL17F molecules, potentially enabling the formation of topologically distinct complexes.

It localises to the secreted. Effector cytokine of innate and adaptive immune system involved in antimicrobial host defense and maintenance of tissue integrity. IL17A-IL17F signals via IL17RA-IL17RC heterodimeric receptor complex, triggering homotypic interaction of IL17RA and IL17RC chains with TRAF3IP2 adapter through SEFIR domains. This leads to downstream TRAF6-mediated activation of NF-kappa-B and MAPkinase pathways ultimately resulting in transcriptional activation of cytokines, chemokines, antimicrobial peptides and matrix metalloproteinases, with potential strong immune inflammation. IL17A-IL17F is primarily involved in host defense against extracellular bacteria and fungi by inducing neutrophilic inflammation. As signature effector cytokine of T-helper 17 cells (Th17), primarily induces neutrophil activation and recruitment at infection and inflammatory sites. Stimulates the production of antimicrobial beta-defensins DEFB1, DEFB103A, and DEFB104A by mucosal epithelial cells, limiting the entry of microbes through the epithelial barriers. IL17F homodimer can signal via IL17RC homodimeric receptor complex, triggering downstream activation of TRAF6 and NF-kappa-B signaling pathway. Via IL17RC induces transcriptional activation of IL33, a potent cytokine that stimulates group 2 innate lymphoid cells and adaptive T-helper 2 cells involved in pulmonary allergic response to fungi. Likely via IL17RC, promotes sympathetic innervation of peripheral organs by coordinating the communication between gamma-delta T cells and parenchymal cells. Stimulates sympathetic innervation of thermogenic adipose tissue by driving TGFB1 expression. Regulates the composition of intestinal microbiota and immune tolerance by inducing antimicrobial proteins that specifically control the growth of commensal Firmicutes and Bacteroidetes. This chain is Interleukin-17F (IL17F), found in Callithrix jacchus (White-tufted-ear marmoset).